The primary structure comprises 295 residues: MPSAPQKTKSFRLQTKYVFLTYPRCSSSAENLRDFLWDKLSRFAIFFIAIATELHQDGTPHLHCLIQLDKRSNIRDPSFFDLEGNHPNIQPAKNSEQVLEYISKDGNVITKGEFKKHRVSPSKSDERWRTIIQTATSKEEYLDMIKDEFPHEWATKLQWLEYSANKLFPPQPEIYQATFTEEDLQCHEDLQLWRDQHLYHVSVDAYRLVHNVTLVEAHSDLVWMDDISRNLEGLEPGSPPSTSADQVVPERQHGPEASEGTITGMGPSTSLSMMTTRPTTSSTTSPSNSSHSGSN.

The 103-residue stretch at 12-114 (RLQTKYVFLT…DGNVITKGEF (103 aa)) folds into the CRESS-DNA virus Rep endonuclease domain. The short motif at 19 to 22 (FLTY) is the RCR-1 element. Residues Glu-53, His-61, and His-63 each contribute to the a divalent metal cation site. Residues 61-63 (HLH) carry the RCR-2 motif. Tyr-101 serves as the catalytic For DNA cleavage activity. Residues 101–104 (YISK) carry the RCR-3 motif. Asp-105 serves as a coordination point for a divalent metal cation. The segment at 163-175 (SANKLFPPQPEIY) is oligomerization. The LXCXE motif, interaction with host RBR1 motif lies at 184-188 (LQCHE). A disordered region spans residues 232-295 (EGLEPGSPPS…PSNSSHSGSN (64 aa)). Residues 267 to 295 (PSTSLSMMTTRPTTSSTTSPSNSSHSGSN) are compositionally biased toward low complexity.

This sequence belongs to the geminiviridae Rep protein family. As to quaternary structure, homooligomer. Interacts (via LXCXE domain) with host retinoblastoma-related protein 1 (RBR1), and may thereby deregulate the host cell cycle. Part of the C- and V-complexes which are RepA-Rep-DNA complexes involved in the c-sense and v-sense transcription. The cofactor is Mg(2+). Mn(2+) is required as a cofactor.

It is found in the host nucleus. Its subcellular location is the host cytoplasm. In terms of biological role, implicated in enhancement of V-sense gene expression. Acts a an inhibitor of C-sense gene transcription. In Datura stramonium (Jimsonweed), this protein is Replication-associated protein A.